The chain runs to 637 residues: Serine/threonine-protein kinase Nek11 (637 aa).

The region spanning 29–287 (YVLQQKLGSG…AIEILKIPYI (259 aa)) is the Protein kinase domain. ATP-binding positions include 35-43 (LGSGSFGTV) and K61. Catalysis depends on D158, which acts as the Proton acceptor. Residue S273 is modified to Phosphoserine; by CHEK1. Positions 302–385 (TLEDKNLDCQ…QELRSRNFQQ (84 aa)) form a coiled coil. Residues 399–446 (GMEEKEEQPEGRPSCSPQDEDEERWQDREEEFDEPTLENLSEPQPIPS) are disordered. Positions 416–434 (QDEDEERWQDREEEFDEPT) are enriched in acidic residues.

The protein belongs to the protein kinase superfamily. NEK Ser/Thr protein kinase family. NIMA subfamily. Interacts with NEK2. Mn(2+) is required as a cofactor. The cofactor is Mg(2+). Phosphorylated by NEK2. Phosphorylation at Ser-273 is important for its activation.

Its subcellular location is the nucleus. The protein resides in the nucleolus. It carries out the reaction L-seryl-[protein] + ATP = O-phospho-L-seryl-[protein] + ADP + H(+). It catalyses the reaction L-threonyl-[protein] + ATP = O-phospho-L-threonyl-[protein] + ADP + H(+). With respect to regulation, autorepressed by intramolecular binding of the C-terminus which dissociates following phosphorylation by NEK2. Activated in response to DNA damage. Inhibited by zinc. Its function is as follows. Protein kinase which plays an important role in the G2/M checkpoint response to DNA damage. Controls degradation of CDC25A by directly phosphorylating it on residues whose phosphorylation is required for BTRC-mediated polyubiquitination and degradation. This chain is Serine/threonine-protein kinase Nek11 (NEK11), found in Macaca fascicularis (Crab-eating macaque).